Reading from the N-terminus, the 275-residue chain is Methylglyoxal reductase DkgA (275 aa).

Y51 acts as the Proton donor in catalysis. H107 contacts substrate. 187–241 contributes to the NADP(+) binding site; sequence SPLAQGGKGVFDQKVIRDLADKYGKTPAQIVIRWHLDSGLVVIPKSVTPSRIAEN.

Belongs to the aldo/keto reductase family. Monomer.

The protein localises to the cytoplasm. It catalyses the reaction hydroxyacetone + NADP(+) = methylglyoxal + NADPH + H(+). The enzyme catalyses a primary alcohol + NADP(+) = an aldehyde + NADPH + H(+). The catalysed reaction is 2-dehydro-L-idonate + NADP(+) = 2,5-didehydro-D-gluconate + NADPH + H(+). In terms of biological role, aldo-keto reductase that significantly contributes to cellular methylglyoxal detoxification by catalyzing the NADPH-dependent conversion of methylglyoxal to acetol. It also exhibits fairly high activity with glyoxal. Shows broad specificity and can use aromatic aldehydes such as 4-nitrobenzaldehyde, 3-nitrobenzaldehyde and benzaldehyde, and phenylglyoxal. Shows beta-keto ester reductase activity toward ethyl acetoacetate and a variety of 2-substituted derivatives. Also catalyzes the reduction of 2,5-diketo-D-gluconic acid (25DKG) to 2-keto-L-gulonic acid (2KLG) and could be involved in ketogluconate metabolism. However, the specific activity of the enzyme toward 2,5-diketo-D-gluconate was reported to be almost 400-fold lower than its activity toward methylglyoxal. Can catalyze in vitro the NADPH-dependent reduction of furfural, a natural product of lignocellulosic decomposition, to the less toxic product, furfuryl alcohol. However, it is unlikely that furfural is a physiological substrate. This Escherichia coli (strain K12) protein is Methylglyoxal reductase DkgA.